A 181-amino-acid polypeptide reads, in one-letter code: 28 kDa heat- and acid-stable phosphoprotein (181 aa).

Residues 1 to 14 (MPKGGRKGGHKGRA) show a composition bias toward basic residues. Residues 1–117 (MPKGGRKGGH…SRREREEIEK (117 aa)) form a disordered region. At Thr-18 the chain carries Phosphothreonine. Phosphoserine is present on Ser-19. Basic and acidic residues predominate over residues 30–59 (EKQKAREEEEQKEGGDGAAGDPKKEKKSLD). Lys-52 participates in a covalent cross-link: Glycyl lysine isopeptide (Lys-Gly) (interchain with G-Cter in SUMO2). Phosphoserine is present on residues Ser-57, Ser-60, and Ser-63. A compositionally biased stretch (acidic residues) spans 60 to 69 (SDESEDEEDD). Tyr-70 carries the phosphotyrosine modification. The segment covering 102–117 (DGPKELSRREREEIEK) has biased composition (basic and acidic residues). N6-methyllysine is present on Lys-126. Residues Lys-132 and Lys-164 each carry the N6-acetyllysine modification. Positions 151–167 (EEAARKKEEERKAKDDA) are enriched in basic and acidic residues. The tract at residues 151–181 (EEAARKKEEERKAKDDATLSGKRMQSLSLNK) is disordered. Phosphoserine occurs at positions 176 and 178.

The protein belongs to the PDAP1 family.

Functionally, enhances PDGFA-stimulated cell growth in fibroblasts, but inhibits the mitogenic effect of PDGFB. This Homo sapiens (Human) protein is 28 kDa heat- and acid-stable phosphoprotein (PDAP1).